The sequence spans 163 residues: UPF0262 protein RPB_4349 (163 aa).

It belongs to the UPF0262 family.

The polypeptide is UPF0262 protein RPB_4349 (Rhodopseudomonas palustris (strain HaA2)).